A 110-amino-acid chain; its full sequence is UPF0122 protein GWCH70_1086 (110 aa).

This sequence belongs to the UPF0122 family.

Its function is as follows. Might take part in the signal recognition particle (SRP) pathway. This is inferred from the conservation of its genetic proximity to ftsY/ffh. May be a regulatory protein. This is UPF0122 protein GWCH70_1086 from Geobacillus sp. (strain WCH70).